Here is a 298-residue protein sequence, read N- to C-terminus: UDP-N-acetylenolpyruvoylglucosamine reductase (298 aa).

Residues 26–190 (RAGGPAERLY…VAAVLDLEPG (165 aa)) enclose the FAD-binding PCMH-type domain. R170 is an active-site residue. Catalysis depends on S219, which acts as the Proton donor. E289 is a catalytic residue.

Belongs to the MurB family. It depends on FAD as a cofactor.

It localises to the cytoplasm. It catalyses the reaction UDP-N-acetyl-alpha-D-muramate + NADP(+) = UDP-N-acetyl-3-O-(1-carboxyvinyl)-alpha-D-glucosamine + NADPH + H(+). It functions in the pathway cell wall biogenesis; peptidoglycan biosynthesis. In terms of biological role, cell wall formation. This is UDP-N-acetylenolpyruvoylglucosamine reductase from Alkalilimnicola ehrlichii (strain ATCC BAA-1101 / DSM 17681 / MLHE-1).